The primary structure comprises 565 residues: Augmin complex subunit dgt3 (565 aa).

Coiled coils occupy residues 135–171 (ELQLREKDLIAECQSKAKQLEELQQENCRLSAEAKKA) and 212–241 (QDYDEFQSAEEDLGREKAKLEDLERGIQFY).

Belongs to the HAUS3 family. As to quaternary structure, component of the augmin complex composed of dgt2, dgt3, dgt4, dgt5, dgt6, msd1, msd5 and wac. The complex interacts directly or indirectly with microtubules and is required for centrosome-independent generation of spindle microtubules.

Its subcellular location is the cytoplasm. It localises to the cytoskeleton. The protein localises to the spindle. Functionally, as part of the augmin complex, plays a role in centrosome-independent generation of spindle microtubules. The complex is required for mitotic spindle assembly through its involvement in localizing gamma-tubulin to spindle microtubules. This is Augmin complex subunit dgt3 from Drosophila melanogaster (Fruit fly).